Here is a 218-residue protein sequence, read N- to C-terminus: Glutathione S-transferase Mu 3 (218 aa).

In terms of domain architecture, GST N-terminal spans 2 to 88 (PMTLGYWNTR…YLGRKHNLCG (87 aa)). Residues 7–8 (YW), 46–50 (WLSEK), and 59–60 (NL) each bind glutathione. Lys50 participates in a covalent cross-link: Glycyl lysine isopeptide (Lys-Gly) (interchain with G-Cter in SUMO2). A Glycyl lysine isopeptide (Lys-Gly) (interchain with G-Cter in SUMO2) cross-link involves residue Lys69. 72–73 (QS) contributes to the glutathione binding site. In terms of domain architecture, GST C-terminal spans 90–208 (TEEERIRVDT…KSSRFLPRPV (119 aa)).

This sequence belongs to the GST superfamily. Mu family. Homodimer.

Its subcellular location is the cytoplasm. It catalyses the reaction RX + glutathione = an S-substituted glutathione + a halide anion + H(+). In terms of biological role, conjugation of reduced glutathione to a wide number of exogenous and endogenous hydrophobic electrophiles. The sequence is that of Glutathione S-transferase Mu 3 (Gstm3) from Mus musculus (Mouse).